Here is a 426-residue protein sequence, read N- to C-terminus: Glutamate-1-semialdehyde 2,1-aminomutase (426 aa).

Lys-265 carries the post-translational modification N6-(pyridoxal phosphate)lysine.

Belongs to the class-III pyridoxal-phosphate-dependent aminotransferase family. HemL subfamily. In terms of assembly, homodimer. Requires pyridoxal 5'-phosphate as cofactor.

It is found in the cytoplasm. It carries out the reaction (S)-4-amino-5-oxopentanoate = 5-aminolevulinate. It participates in porphyrin-containing compound metabolism; protoporphyrin-IX biosynthesis; 5-aminolevulinate from L-glutamyl-tRNA(Glu): step 2/2. The protein is Glutamate-1-semialdehyde 2,1-aminomutase of Hydrogenovibrio crunogenus (strain DSM 25203 / XCL-2) (Thiomicrospira crunogena).